The chain runs to 264 residues: Regulator of cytoskeleton and endocytosis RVS161 (264 aa).

Residues 15–239 (ASVIVKDVDK…LDPASRDEYA (225 aa)) form the BAR domain.

It is found in the cytoplasm. The protein resides in the cytoskeleton. Component of a cytoskeletal structure that is required for the formation of endocytic vesicles at the plasma membrane level. Plays an important role in virulence. This is Regulator of cytoskeleton and endocytosis RVS161 (RVS161) from Candida albicans (strain SC5314 / ATCC MYA-2876) (Yeast).